The sequence spans 143 residues: Nucleoside diphosphate kinase (143 aa).

Positions 11, 59, 87, 93, 104, and 114 each coordinate ATP. Residue His-117 is the Pros-phosphohistidine intermediate of the active site.

Belongs to the NDK family. As to quaternary structure, homotetramer. Requires Mg(2+) as cofactor.

Its subcellular location is the cytoplasm. It carries out the reaction a 2'-deoxyribonucleoside 5'-diphosphate + ATP = a 2'-deoxyribonucleoside 5'-triphosphate + ADP. The enzyme catalyses a ribonucleoside 5'-diphosphate + ATP = a ribonucleoside 5'-triphosphate + ADP. Its function is as follows. Major role in the synthesis of nucleoside triphosphates other than ATP. The ATP gamma phosphate is transferred to the NDP beta phosphate via a ping-pong mechanism, using a phosphorylated active-site intermediate. In Thioalkalivibrio sulfidiphilus (strain HL-EbGR7), this protein is Nucleoside diphosphate kinase.